Consider the following 128-residue polypeptide: uncharacterized protein (128 aa).

Cys10 and Cys13 are disulfide-bonded.

This sequence belongs to the ArsC family.

This is an uncharacterized protein from Ureaplasma parvum serovar 3 (strain ATCC 700970).